Reading from the N-terminus, the 196-residue chain is Phosphoheptose isomerase (196 aa).

The 166-residue stretch at 31-196 (VARQFKAGNK…KAGLEAQIAV (166 aa)) folds into the SIS domain. Position 46–48 (46–48 (NGG)) interacts with substrate. Positions 55 and 59 each coordinate Zn(2+). Substrate-binding positions include glutamate 59, 88 to 89 (ND), 114 to 116 (STS), serine 119, and glutamine 166. Zn(2+) contacts are provided by glutamine 166 and histidine 174.

This sequence belongs to the SIS family. GmhA subfamily. Requires Zn(2+) as cofactor.

It localises to the cytoplasm. It carries out the reaction 2 D-sedoheptulose 7-phosphate = D-glycero-alpha-D-manno-heptose 7-phosphate + D-glycero-beta-D-manno-heptose 7-phosphate. The protein operates within carbohydrate biosynthesis; D-glycero-D-manno-heptose 7-phosphate biosynthesis; D-glycero-alpha-D-manno-heptose 7-phosphate and D-glycero-beta-D-manno-heptose 7-phosphate from sedoheptulose 7-phosphate: step 1/1. In terms of biological role, catalyzes the isomerization of sedoheptulose 7-phosphate in D-glycero-D-manno-heptose 7-phosphate. The chain is Phosphoheptose isomerase from Crocosphaera subtropica (strain ATCC 51142 / BH68) (Cyanothece sp. (strain ATCC 51142)).